A 699-amino-acid chain; its full sequence is Endoplasmic reticulum mannosyl-oligosaccharide 1,2-alpha-mannosidase (699 aa).

The Cytoplasmic segment spans residues 1–84 (MAACEGRRSG…WKQLSRLQRN (84 aa)). Residues 85-105 (MILFLLAFLLFCGLLFYINLA) form a helical; Signal-anchor for type II membrane protein membrane-spanning segment. Over 106–699 (DHWKALAFRL…AHPLPIWTPA (594 aa)) the chain is Lumenal. A disordered region spans residues 125 to 243 (IAGLKPANPP…LPPARTQGTP (119 aa)). Residues 176-201 (DLKDGTQEEATKRQEAPVDPRPEGDP) show a composition bias toward basic and acidic residues. The active-site Proton donor is glutamate 330. Aspartate 463 is an active-site residue. Cysteine 527 and cysteine 556 are oxidised to a cystine. Glutamate 570 functions as the Proton donor in the catalytic mechanism. Residue glutamate 599 is part of the active site. Ca(2+) is bound at residue threonine 688.

This sequence belongs to the glycosyl hydrolase 47 family. Ca(2+) serves as cofactor. In terms of tissue distribution, widely expressed.

Its subcellular location is the endoplasmic reticulum membrane. It catalyses the reaction N(4)-(alpha-D-Man-(1-&gt;2)-alpha-D-Man-(1-&gt;2)-alpha-D-Man-(1-&gt;3)-[alpha-D-Man-(1-&gt;2)-alpha-D-Man-(1-&gt;3)-[alpha-D-Man-(1-&gt;2)-alpha-D-Man-(1-&gt;6)]-alpha-D-Man-(1-&gt;6)]-beta-D-Man-(1-&gt;4)-beta-D-GlcNAc-(1-&gt;4)-beta-D-GlcNAc)-L-asparaginyl-[protein] (N-glucan mannose isomer 9A1,2,3B1,2,3) + 4 H2O = N(4)-(alpha-D-Man-(1-&gt;3)-[alpha-D-Man-(1-&gt;3)-[alpha-D-Man-(1-&gt;6)]-alpha-D-Man-(1-&gt;6)]-beta-D-Man-(1-&gt;4)-beta-D-GlcNAc-(1-&gt;4)-beta-D-GlcNAc)-L-asparaginyl-[protein] (N-glucan mannose isomer 5A1,2) + 4 beta-D-mannose. The enzyme catalyses N(4)-(alpha-D-Man-(1-&gt;2)-alpha-D-Man-(1-&gt;2)-alpha-D-Man-(1-&gt;3)-[alpha-D-Man-(1-&gt;3)-[alpha-D-Man-(1-&gt;2)-alpha-D-Man-(1-&gt;6)]-alpha-D-Man-(1-&gt;6)]-beta-D-Man-(1-&gt;4)-beta-D-GlcNAc-(1-&gt;4)-beta-D-GlcNAc)-L-asparaginyl-[protein] (N-glucan mannose isomer 8A1,2,3B1,3) + 3 H2O = N(4)-(alpha-D-Man-(1-&gt;3)-[alpha-D-Man-(1-&gt;3)-[alpha-D-Man-(1-&gt;6)]-alpha-D-Man-(1-&gt;6)]-beta-D-Man-(1-&gt;4)-beta-D-GlcNAc-(1-&gt;4)-beta-D-GlcNAc)-L-asparaginyl-[protein] (N-glucan mannose isomer 5A1,2) + 3 beta-D-mannose. It functions in the pathway protein modification; protein glycosylation. Its activity is regulated as follows. Inhibited by both 1-deoxymannojirimycin (dMNJ) and kifunensine. In terms of biological role, involved in glycoprotein quality control targeting of misfolded glycoproteins for degradation. It primarily trims a single alpha-1,2-linked mannose residue from Man(9)GlcNAc(2) to produce Man(8)GlcNAc(2), but at high enzyme concentrations, as found in the ER quality control compartment (ERQC), it further trims the carbohydrates to Man(5-6)GlcNAc(2). In Homo sapiens (Human), this protein is Endoplasmic reticulum mannosyl-oligosaccharide 1,2-alpha-mannosidase (MAN1B1).